Consider the following 375-residue polypeptide: Adiponectin receptor protein 1 (375 aa).

Residues 1 to 60 are disordered; sequence MSSHKGSAGAQGNGAPSGNREADTVELAELGPLLEEKGKRAASSPAKAEEDQACPVPQEE. The Cytoplasmic segment spans residues 1–136; sequence MSSHKGSAGA…SIFRIHTETG (136 aa). Residues 137-157 form a helical membrane-spanning segment; sequence NIWTHLLGFVLFLFLGILTML. Residues 158 to 170 are Extracellular-facing; it reads RPNMYFMAPLQEK. Residues 171–191 traverse the membrane as a helical segment; it reads VVFGMFFLGAVLCLSFSWLFH. His-191 is a Zn(2+) binding site. Topologically, residues 192 to 203 are cytoplasmic; sequence TVYCHSEKVSRT. A helical membrane pass occupies residues 204–224; that stretch reads FSKLDYSGIALLIMGSFVPWL. At 225–234 the chain is on the extracellular side; the sequence is YYSFYCSPQP. The helical transmembrane segment at 235-255 threads the bilayer; the sequence is RLIYLSIVCVLGISAIIVAQW. Residues 256–264 lie on the Cytoplasmic side of the membrane; the sequence is DRFATPKHR. Residues 265–285 form a helical membrane-spanning segment; that stretch reads QTRAGVFLGLGLSGVVPTMHF. Over 286–298 the chain is Extracellular; it reads TIAEGFVKATTVG. A helical membrane pass occupies residues 299-319; sequence QMGWFFLMAVMYITGAGLYAA. Topologically, residues 320 to 337 are cytoplasmic; sequence RIPERFFPGKFDIWFQSH. 2 residues coordinate Zn(2+): His-337 and His-341. The helical transmembrane segment at 338–358 threads the bilayer; that stretch reads QIFHVLVVAAAFVHFYGVSNL. At 359 to 375 the chain is on the extracellular side; it reads QEFRYGLEGGCTDDSLL.

Belongs to the ADIPOR family. As to quaternary structure, may form homooligomers and heterooligomers with ADIPOR2. Interacts with APPL2 (via BAR domain); hinders the accessibility of APPL1 to ADIPOR1; negatively regulates adiponectin signaling; ADIPOQ dissociates this interaction and facilitates the recruitment of APPL1 to ADIPOR1. Interacts with APPL1; ADIPOQ enhances this interaction; inhibites adiponectin-stimulated binding of APPL2 to ADIPOR1. In terms of tissue distribution, detected in brain and quadriceps muscle (at protein level). Widely expressed. Expressed in heart, kidney, liver, lung, skeletal muscle, white adipose tissue, brown adipose tissue, aorta and spleen. Weakly expressed in brain and testis.

Its subcellular location is the cell membrane. Functionally, receptor for ADIPOQ, an essential hormone secreted by adipocytes that regulates glucose and lipid metabolism. Required for normal glucose and fat homeostasis and for maintaining a normal body weight. ADIPOQ-binding activates a signaling cascade that leads to increased AMPK activity, and ultimately to increased fatty acid oxidation, increased glucose uptake and decreased gluconeogenesis. Has high affinity for globular adiponectin and low affinity for full-length adiponectin. The protein is Adiponectin receptor protein 1 of Mus musculus (Mouse).